Reading from the N-terminus, the 118-residue chain is Large ribosomal subunit protein bL20 (118 aa).

This sequence belongs to the bacterial ribosomal protein bL20 family.

Functionally, binds directly to 23S ribosomal RNA and is necessary for the in vitro assembly process of the 50S ribosomal subunit. It is not involved in the protein synthesizing functions of that subunit. The protein is Large ribosomal subunit protein bL20 of Fervidobacterium nodosum (strain ATCC 35602 / DSM 5306 / Rt17-B1).